The following is a 165-amino-acid chain: Nucleotide-binding protein Ccur92_01650 (165 aa).

This sequence belongs to the YajQ family.

Functionally, nucleotide-binding protein. This Campylobacter curvus (strain 525.92) protein is Nucleotide-binding protein Ccur92_01650.